The chain runs to 149 residues: Transcriptional repressor NrdR (149 aa).

The segment at 3–34 (CPFCQSDDTKVLDTRLIDDGSQVRRRRECVSC) is a zinc-finger region. In terms of domain architecture, ATP-cone spans 49–139 (PHLIKSDDSR…VYRQFQDIEA (91 aa)).

It belongs to the NrdR family. Requires Zn(2+) as cofactor.

Negatively regulates transcription of bacterial ribonucleotide reductase nrd genes and operons by binding to NrdR-boxes. The protein is Transcriptional repressor NrdR of Ruthia magnifica subsp. Calyptogena magnifica.